We begin with the raw amino-acid sequence, 401 residues long: NADH-quinone oxidoreductase subunit D 2 (401 aa).

Belongs to the complex I 49 kDa subunit family. In terms of assembly, NDH-1 is composed of 14 different subunits. Subunits NuoB, C, D, E, F, and G constitute the peripheral sector of the complex.

Its subcellular location is the cell inner membrane. It catalyses the reaction a quinone + NADH + 5 H(+)(in) = a quinol + NAD(+) + 4 H(+)(out). Its function is as follows. NDH-1 shuttles electrons from NADH, via FMN and iron-sulfur (Fe-S) centers, to quinones in the respiratory chain. The immediate electron acceptor for the enzyme in this species is believed to be ubiquinone. Couples the redox reaction to proton translocation (for every two electrons transferred, four hydrogen ions are translocated across the cytoplasmic membrane), and thus conserves the redox energy in a proton gradient. The sequence is that of NADH-quinone oxidoreductase subunit D 2 from Koribacter versatilis (strain Ellin345).